Here is a 287-residue protein sequence, read N- to C-terminus: Glycine--tRNA ligase alpha subunit (287 aa).

Belongs to the class-II aminoacyl-tRNA synthetase family. As to quaternary structure, tetramer of two alpha and two beta subunits.

It is found in the cytoplasm. It carries out the reaction tRNA(Gly) + glycine + ATP = glycyl-tRNA(Gly) + AMP + diphosphate. The chain is Glycine--tRNA ligase alpha subunit from Campylobacter jejuni (strain RM1221).